Here is a 259-residue protein sequence, read N- to C-terminus: uncharacterized protein (259 aa).

Residues 19–249 form the Radical SAM core domain; the sequence is TKIPGAKYVI…DEVINTIKKK (231 aa). [4Fe-4S] cluster is bound by residues Cys34, Cys38, and Cys41.

[4Fe-4S] cluster is required as a cofactor.

This is an uncharacterized protein from Methanocaldococcus jannaschii (strain ATCC 43067 / DSM 2661 / JAL-1 / JCM 10045 / NBRC 100440) (Methanococcus jannaschii).